The following is a 353-amino-acid chain: Mitochondrial distribution and morphology protein 10 (353 aa).

Belongs to the MDM10 family. Component of the ER-mitochondria encounter structure (ERMES) or MDM complex, composed of MMM1, MDM10, MDM12 and MDM34. Associates with the mitochondrial outer membrane sorting assembly machinery SAM(core) complex.

Its subcellular location is the mitochondrion outer membrane. Its function is as follows. Component of the ERMES/MDM complex, which serves as a molecular tether to connect the endoplasmic reticulum and mitochondria. Components of this complex are involved in the control of mitochondrial shape and protein biogenesis and may function in phospholipid exchange. MDM10 is involved in the late assembly steps of the general translocase of the mitochondrial outer membrane (TOM complex). Functions in the TOM40-specific route of the assembly of outer membrane beta-barrel proteins, including the association of TOM40 with the receptor TOM22 and small TOM proteins. Can associate with the SAM(core) complex as well as the MDM12-MMM1 complex, both involved in late steps of the major beta-barrel assembly pathway, that is responsible for biogenesis of all outer membrane beta-barrel proteins. May act as a switch that shuttles between both complexes and channels precursor proteins into the TOM40-specific pathway. Plays a role in mitochondrial morphology and in the inheritance of mitochondria. The chain is Mitochondrial distribution and morphology protein 10 from Yarrowia lipolytica (strain CLIB 122 / E 150) (Yeast).